Here is a 653-residue protein sequence, read N- to C-terminus: Acetyl-coenzyme A synthetase (653 aa).

Residues 196–199 (RGGK) and Thr-315 contribute to the CoA site. Residues 391–393 (GEP), 415–420 (DTWWQT), Asp-506, and Arg-521 each bind ATP. Ser-529 contacts CoA. Arg-532 is an ATP binding site. Mg(2+) contacts are provided by Val-543 and Val-548. N6-acetyllysine is present on Lys-618.

The protein belongs to the ATP-dependent AMP-binding enzyme family. Requires Mg(2+) as cofactor. In terms of processing, acetylated. Deacetylation by the SIR2-homolog deacetylase activates the enzyme.

It carries out the reaction acetate + ATP + CoA = acetyl-CoA + AMP + diphosphate. Catalyzes the conversion of acetate into acetyl-CoA (AcCoA), an essential intermediate at the junction of anabolic and catabolic pathways. AcsA undergoes a two-step reaction. In the first half reaction, AcsA combines acetate with ATP to form acetyl-adenylate (AcAMP) intermediate. In the second half reaction, it can then transfer the acetyl group from AcAMP to the sulfhydryl group of CoA, forming the product AcCoA. The polypeptide is Acetyl-coenzyme A synthetase (Laribacter hongkongensis (strain HLHK9)).